The chain runs to 405 residues: L-carnitine CoA-transferase (405 aa).

Residues lysine 97 and arginine 104 each coordinate CoA. Aspartate 169 acts as the Nucleophile in catalysis.

Belongs to the CoA-transferase III family. CaiB subfamily. Homodimer.

The protein resides in the cytoplasm. It carries out the reaction crotonobetainyl-CoA + (R)-carnitine = crotonobetaine + (R)-carnitinyl-CoA. It catalyses the reaction 4-(trimethylamino)butanoyl-CoA + (R)-carnitine = (R)-carnitinyl-CoA + 4-(trimethylamino)butanoate. The protein operates within amine and polyamine metabolism; carnitine metabolism. Its function is as follows. Catalyzes the reversible transfer of the CoA moiety from gamma-butyrobetainyl-CoA to L-carnitine to generate L-carnitinyl-CoA and gamma-butyrobetaine. Is also able to catalyze the reversible transfer of the CoA moiety from gamma-butyrobetainyl-CoA or L-carnitinyl-CoA to crotonobetaine to generate crotonobetainyl-CoA. This chain is L-carnitine CoA-transferase, found in Escherichia coli (strain K12 / MC4100 / BW2952).